Here is a 283-residue protein sequence, read N- to C-terminus: GTPase Era (283 aa).

One can recognise an Era-type G domain in the interval 7 to 175; sequence YCGHVIIVGK…KNIIKSYLPE (169 aa). The G1 stretch occupies residues 15–22; it reads GKANVGKS. 15–22 provides a ligand contact to GTP; sequence GKANVGKS. A G2 region spans residues 41-45; the sequence is NTTQS. Residues 62-65 are G3; the sequence is DTPG. Residues 62–66 and 124–127 each bind GTP; these read DTPGV and NKID. The G4 stretch occupies residues 124–127; sequence NKID. The segment at 154–156 is G5; that stretch reads ISA. The KH type-2 domain occupies 198 to 283; sequence IREQLILFLG…HLVLWVKDKN (86 aa).

The protein belongs to the TRAFAC class TrmE-Era-EngA-EngB-Septin-like GTPase superfamily. Era GTPase family. Monomer.

Its subcellular location is the cytoplasm. It is found in the cell membrane. Its function is as follows. An essential GTPase that binds both GDP and GTP, with rapid nucleotide exchange. Plays a role in 16S rRNA processing and 30S ribosomal subunit biogenesis and possibly also in cell cycle regulation and energy metabolism. In Buchnera aphidicola subsp. Acyrthosiphon pisum (strain Tuc7), this protein is GTPase Era.